Consider the following 450-residue polypeptide: Cell division cycle 20.5, cofactor of APC complex (450 aa).

WD repeat units lie at residues 129–166 (ADDF…TYKL), 171–210 (EEEG…QVRT), 214–251 (GHES…SIVE), 255–294 (GHTE…SSNP), 304–346 (EHTA…CLNS), 348–389 (ETGS…KMAE), and 392–431 (GHTS…PKTT).

This sequence belongs to the WD repeat CDC20/Fizzy family. In terms of assembly, the APC/C is composed of at least 11 subunits that stay tightly associated throughout the cell cycle. Binds to GIG1 and PYM. Part of the mitotic checkpoint complex (MCC); interacts with MAD2 and BUB1.

Its subcellular location is the nucleus. Its pathway is protein modification; protein ubiquitination. Functionally, component of the anaphase promoting complex/cyclosome (APC/C), a cell cycle-regulated E3 ubiquitin-protein ligase complex that controls progression through mitosis and the G1 phase of the cell cycle. The protein is Cell division cycle 20.5, cofactor of APC complex (CDC20-5) of Arabidopsis thaliana (Mouse-ear cress).